A 935-amino-acid chain; its full sequence is UvrABC system protein A (935 aa).

Residue 31–38 (GLSGSGKS) coordinates ATP. The C4-type zinc-finger motif lies at 254 to 281 (CFKCKMSFEELEPLSFSFNSPKGACESC). ABC transporter domains are found at residues 310 to 579 (IFGY…NNHS) and 599 to 931 (KEKH…KFLA). ATP is bound at residue 631-638 (GVSGSGKS). The C4-type zinc finger occupies 731 to 757 (CEKCQGDGDIKIEMHFLPDVLVQCDSC).

The protein belongs to the ABC transporter superfamily. UvrA family. Forms a heterotetramer with UvrB during the search for lesions.

It is found in the cytoplasm. Functionally, the UvrABC repair system catalyzes the recognition and processing of DNA lesions. UvrA is an ATPase and a DNA-binding protein. A damage recognition complex composed of 2 UvrA and 2 UvrB subunits scans DNA for abnormalities. When the presence of a lesion has been verified by UvrB, the UvrA molecules dissociate. The chain is UvrABC system protein A from Helicobacter pylori (strain ATCC 700392 / 26695) (Campylobacter pylori).